The chain runs to 331 residues: Laforin (331 aa).

Residues 1 to 124 (MLFRFGVVVP…NNLVDGVYCL (124 aa)) form the CBM20 domain. Ser-25 carries the post-translational modification Phosphoserine; by AMPK. Substrate is bound by residues Trp-32, Lys-87, 103–107 (GPHHD), Asp-197, Asp-235, and Arg-241. The Tyrosine-protein phosphatase domain maps to 156–323 (HYSRILPNIW…QQDFFQKFGK (168 aa)). Cys-266 acts as the Phosphocysteine intermediate in catalysis. Positions 266–272 (CNAGVGR) match the Glucan phosphatase signature motif CXAGXGR motif. Substrate contacts are provided by residues 267–272 (NAGVGR) and Tyr-304.

Belongs to the protein-tyrosine phosphatase family. As to quaternary structure, homodimer. Interacts with itself. Interacts with PPP1R3B, PPP1R3C, PPP1R3D, HIRIP5, and EPM2AIP1. Binds glycogen and Lafora bodies. Interacts with NHLRC1/malin (via the NHL repeats). Forms a complex with NHLRC1/malin and HSP70. Interacts with PPP1R3D; in the presence of NHLC1/malin the interaction leads to ubiquitination and autophagic degradation of PPP1R3D. Interacts (via the phosphatase domain) with MAPT/Tau; the interaction dephosphorylates MAPT. Interacts with PRDM8. In terms of processing, polyubiquitinated by NHLRC1/malin. Post-translationally, phosphorylation on Ser-25 by AMPK affects the phosphatase activity of the enzyme and its ability to homodimerize and interact with NHLRC1, PPP1R3C or PRKAA2. Widely expressed.

It is found in the cytoplasm. It localises to the endoplasmic reticulum membrane. The protein localises to the cell membrane. The catalysed reaction is O-phospho-L-tyrosyl-[protein] + H2O = L-tyrosyl-[protein] + phosphate. It carries out the reaction O-phospho-L-seryl-[protein] + H2O = L-seryl-[protein] + phosphate. It catalyses the reaction O-phospho-L-threonyl-[protein] + H2O = L-threonyl-[protein] + phosphate. Functionally, plays an important role in preventing glycogen hyperphosphorylation and the formation of insoluble aggregates, via its activity as glycogen phosphatase, and by promoting the ubiquitination of proteins involved in glycogen metabolism via its interaction with the E3 ubiquitin ligase NHLRC1/malin. Dephosphorylates phosphotyrosine and synthetic substrates, such as para-nitrophenylphosphate (pNPP), and has low activity with phosphoserine and phosphothreonine substrates (in vitro). Has also been shown to dephosphorylate MAPT. Shows strong phosphatase activity towards complex carbohydrates in vitro, avoiding glycogen hyperphosphorylation which is associated with reduced branching and formation of insoluble aggregates. Forms a complex with NHLRC1/malin and HSP70, which suppresses the cellular toxicity of misfolded proteins by promoting their degradation through the ubiquitin-proteasome system (UPS). Acts as a scaffold protein to facilitate PPP1R3C/PTG ubiquitination by NHLRC1/malin. Also promotes proteasome-independent protein degradation through the macroautophagy pathway. The chain is Laforin (Epm2a) from Rattus norvegicus (Rat).